A 303-amino-acid chain; its full sequence is Protoheme IX farnesyltransferase (303 aa).

Transmembrane regions (helical) follow at residues 25 to 45, 54 to 74, 118 to 138, 166 to 186, 230 to 250, and 280 to 300; these read MGLV…AIVM, IPQI…ACAL, CLFL…VGYV, IGWV…FLVV, LVLL…FVVI, and FVYS…VSLI.

The protein belongs to the UbiA prenyltransferase family. Protoheme IX farnesyltransferase subfamily. Interacts with CtaA.

Its subcellular location is the cell membrane. It carries out the reaction heme b + (2E,6E)-farnesyl diphosphate + H2O = Fe(II)-heme o + diphosphate. It participates in porphyrin-containing compound metabolism; heme O biosynthesis; heme O from protoheme: step 1/1. Its function is as follows. Converts heme B (protoheme IX) to heme O by substitution of the vinyl group on carbon 2 of heme B porphyrin ring with a hydroxyethyl farnesyl side group. In Staphylococcus epidermidis (strain ATCC 12228 / FDA PCI 1200), this protein is Protoheme IX farnesyltransferase.